Consider the following 914-residue polypeptide: Dynamin-2A (914 aa).

Residue Met-1 is modified to N-acetylmethionine. The Dynamin-type G domain occupies 35–303 (PATFLNVVAL…IRSRMKLRLP (269 aa)). The segment at 45 to 52 (GNVGAGKS) is G1 motif. 45 to 52 (GNVGAGKS) is a GTP binding site. Residues 71 to 73 (ATR) are G2 motif. The tract at residues 143-146 (DLPG) is G3 motif. Residues 143–147 (DLPGL) and 204–207 (GKID) contribute to the GTP site. The interval 204–207 (GKID) is G4 motif. The tract at residues 238–241 (AVIG) is G5 motif. Positions 507-522 (RREEELKGRSSKKGQD) are enriched in basic and acidic residues. 2 disordered regions span residues 507 to 570 (RREE…TAGP) and 629 to 648 (PEDE…NGPD). Residues 523–535 (AEQSLLSRATSPQ) show a composition bias toward polar residues. 2 stretches are compositionally biased toward basic and acidic residues: residues 547–560 (SMKD…KETP) and 634–645 (EKSKSSKDKKAN). The 125-residue stretch at 572 to 696 (GEITAGYLMK…WINKLQKVIQ (125 aa)) folds into the PH domain. The GED domain occupies 730 to 823 (LRWMSQEVRG…QLSIHDNRAA (94 aa)). Positions 781 to 805 (NERIESLIQEDQNVKRRRERYQKQS) form a coiled coil. The disordered stretch occupies residues 821-914 (RAAAASSYSD…PPPTGSAYRY (94 aa)). 2 stretches are compositionally biased toward polar residues: residues 826–839 (SSYS…SSPR) and 852–866 (AFNS…SLSK).

It belongs to the TRAFAC class dynamin-like GTPase superfamily. Dynamin/Fzo/YdjA family. As to quaternary structure, binds PtdIns3P. Interacts with SH3P3 (via SH3 domain) and (via C-terminus) with GAMMA-ADR. May homooligomerize or heterooligomerize.

It localises to the cytoplasm. The protein resides in the cytosol. Its subcellular location is the golgi apparatus membrane. It is found in the cytoskeleton. The protein localises to the phragmoplast. It localises to the cytoplasmic vesicle. The protein resides in the clathrin-coated vesicle. It catalyses the reaction GTP + H2O = GDP + phosphate + H(+). With respect to regulation, increased GTPase activity in the presence of phosphatidic acid. Its function is as follows. Microtubule-associated force-producing protein involved in clathrin-mediated vesicle trafficking from the trans-Golgi network to the central vacuole. Able to bind and hydrolyze GTP. Binds specifically to phosphatidylinositol 3-phosphate (PtdIns3P). The polypeptide is Dynamin-2A (DRP2A) (Arabidopsis thaliana (Mouse-ear cress)).